A 392-amino-acid chain; its full sequence is Phospho-N-acetylmuramoyl-pentapeptide-transferase (392 aa).

Helical transmembrane passes span 29–49 (AVMA…FVIR), 76–96 (TMGG…WFDL), 100–120 (FVWI…ADDW), 137–157 (YLWQ…SISE), 193–213 (ISYP…IVGS), 225–245 (GLAI…AYVT), 262–282 (SGEL…FLWF), 289–309 (VFMG…IAVI), 314–334 (IVLA…MMQV), and 369–389 (QVVV…LSTL).

It belongs to the glycosyltransferase 4 family. MraY subfamily. It depends on Mg(2+) as a cofactor.

Its subcellular location is the cell inner membrane. It carries out the reaction UDP-N-acetyl-alpha-D-muramoyl-L-alanyl-gamma-D-glutamyl-meso-2,6-diaminopimeloyl-D-alanyl-D-alanine + di-trans,octa-cis-undecaprenyl phosphate = di-trans,octa-cis-undecaprenyl diphospho-N-acetyl-alpha-D-muramoyl-L-alanyl-D-glutamyl-meso-2,6-diaminopimeloyl-D-alanyl-D-alanine + UMP. It participates in cell wall biogenesis; peptidoglycan biosynthesis. Its function is as follows. Catalyzes the initial step of the lipid cycle reactions in the biosynthesis of the cell wall peptidoglycan: transfers peptidoglycan precursor phospho-MurNAc-pentapeptide from UDP-MurNAc-pentapeptide onto the lipid carrier undecaprenyl phosphate, yielding undecaprenyl-pyrophosphoryl-MurNAc-pentapeptide, known as lipid I. This Polaromonas sp. (strain JS666 / ATCC BAA-500) protein is Phospho-N-acetylmuramoyl-pentapeptide-transferase.